The following is a 222-amino-acid chain: MKIAIDGPSASGKSTVAKIISQKLNIPYLETGLVYRTYAYVSLKFKVPIQDIDKLFSLPVKVVPKIGKTEVYIEGKPVNEEDLRSEEVGKRASELGSIPEFRERINKLFKEIINNKQMVVEGRDAGTHIIPEAPVKVFITASPEERAKRRYEQLKELGYEVSFEEILQKILERDKRDMERPKYPFKPAEDAVIIDTTRKSVEEVVEEVLKIIHERSQSAELI.

Gly7 to Thr15 provides a ligand contact to ATP.

It belongs to the cytidylate kinase family. Type 1 subfamily.

It is found in the cytoplasm. It carries out the reaction CMP + ATP = CDP + ADP. It catalyses the reaction dCMP + ATP = dCDP + ADP. This is Cytidylate kinase from Aquifex aeolicus (strain VF5).